A 257-amino-acid polypeptide reads, in one-letter code: Snake venom serine protease KN1 (257 aa).

The first 18 residues, 1–18, serve as a signal peptide directing secretion; that stretch reads MVLIRVLANLLILQLSYA. A propeptide spanning residues 19 to 24 is cleaved from the precursor; the sequence is QKSSEL. The Peptidase S1 domain maps to 25–248; it reads VVGGHPCNIN…HLDWIKSIIA (224 aa). Intrachain disulfides connect Cys-31–Cys-162, Cys-49–Cys-65, Cys-141–Cys-209, Cys-173–Cys-188, and Cys-199–Cys-224. His-64 serves as the catalytic Charge relay system. An N-linked (GlcNAc...) asparagine glycan is attached at Asn-102. Asp-109 functions as the Charge relay system in the catalytic mechanism. N-linked (GlcNAc...) asparagine glycosylation is found at Asn-120 and Asn-121. Catalysis depends on Ser-203, which acts as the Charge relay system.

Belongs to the peptidase S1 family. Snake venom subfamily. Monomer. Expressed by the venom gland.

Its subcellular location is the secreted. Functionally, snake venom serine protease that may act in the hemostasis system of the prey. This Trimeresurus stejnegeri (Chinese green tree viper) protein is Snake venom serine protease KN1.